The chain runs to 388 residues: Succinate--CoA ligase [ADP-forming] subunit beta (388 aa).

The region spanning 9–244 is the ATP-grasp domain; the sequence is KQLFARYGMP…LSQEDERESR (236 aa). ATP-binding positions include K46, 53-55, E99, T102, and E107; that span reads GRG. Residues N199 and D213 each coordinate Mg(2+). Substrate is bound by residues N264 and 321–323; that span reads GIV.

Belongs to the succinate/malate CoA ligase beta subunit family. As to quaternary structure, heterotetramer of two alpha and two beta subunits. Mg(2+) is required as a cofactor.

It carries out the reaction succinate + ATP + CoA = succinyl-CoA + ADP + phosphate. The catalysed reaction is GTP + succinate + CoA = succinyl-CoA + GDP + phosphate. The protein operates within carbohydrate metabolism; tricarboxylic acid cycle; succinate from succinyl-CoA (ligase route): step 1/1. In terms of biological role, succinyl-CoA synthetase functions in the citric acid cycle (TCA), coupling the hydrolysis of succinyl-CoA to the synthesis of either ATP or GTP and thus represents the only step of substrate-level phosphorylation in the TCA. The beta subunit provides nucleotide specificity of the enzyme and binds the substrate succinate, while the binding sites for coenzyme A and phosphate are found in the alpha subunit. This is Succinate--CoA ligase [ADP-forming] subunit beta from Serratia proteamaculans (strain 568).